The following is a 445-amino-acid chain: Eukaryotic translation initiation factor 3 subunit E (445 aa).

Positions F230–L403 constitute a PCI domain.

It belongs to the eIF-3 subunit E family. Component of the eukaryotic translation initiation factor 3 (eIF-3) complex.

It localises to the cytoplasm. In terms of biological role, component of the eukaryotic translation initiation factor 3 (eIF-3) complex, which is involved in protein synthesis of a specialized repertoire of mRNAs and, together with other initiation factors, stimulates binding of mRNA and methionyl-tRNAi to the 40S ribosome. The eIF-3 complex specifically targets and initiates translation of a subset of mRNAs involved in cell proliferation. In Bombyx mori (Silk moth), this protein is Eukaryotic translation initiation factor 3 subunit E (eIF3-S6).